A 247-amino-acid chain; its full sequence is 2,3-bisphosphoglycerate-dependent phosphoglycerate mutase (247 aa).

Residues 8–15, 21–22, R60, 87–90, K98, 114–115, and 183–184 contribute to the substrate site; these read RHGESQWN, TG, ERHY, RR, and GN. H9 functions as the Tele-phosphohistidine intermediate in the catalytic mechanism. E87 serves as the catalytic Proton donor/acceptor.

This sequence belongs to the phosphoglycerate mutase family. BPG-dependent PGAM subfamily.

It catalyses the reaction (2R)-2-phosphoglycerate = (2R)-3-phosphoglycerate. It functions in the pathway carbohydrate degradation; glycolysis; pyruvate from D-glyceraldehyde 3-phosphate: step 3/5. Functionally, catalyzes the interconversion of 2-phosphoglycerate and 3-phosphoglycerate. This chain is 2,3-bisphosphoglycerate-dependent phosphoglycerate mutase, found in Chlorobium phaeovibrioides (strain DSM 265 / 1930) (Prosthecochloris vibrioformis (strain DSM 265)).